Here is a 249-residue protein sequence, read N- to C-terminus: Gamma-glutamyl peptidase 3 (249 aa).

The Glutamine amidotransferase type-1 domain maps to 19-217 (SEFVKKTYGG…VDRVLNMKLM (199 aa)). The Nucleophile role is filled by Cys-103. Catalysis depends on residues His-196 and Glu-198.

The protein belongs to the peptidase C26 family.

It localises to the cytoplasm. It is found in the cytosol. It catalyses the reaction an S-[(1E)-1-(hydroxyimino)-omega-(methylsulfanyl)alkyl]-L-glutathione + H2O = an S-[(1E)-1-(hydroxyimino)-omega-(methylsulfanyl)alkyl]-L-cysteinylglycine + L-glutamate. The catalysed reaction is (E)-1-(glutathione-S-yl)-2-(1H-indol-3-yl)acetohydroximate + H2O = (E)-1-(glycyl-L-cystein-S-yl)-2-(1H-indol-3-yl)acetohydroximate + L-glutamate. It carries out the reaction 2-(glutathion-S-yl)-2-(1H-indol-3-yl)acetonitrile + H2O = 2-(glycyl-L-cystein-S-yl)-2-(1H-indol-3-yl)acetonitrile + L-glutamate. The enzyme catalyses (Z)-1-(glutathione-S-yl)-2-phenylacetohydroximate + H2O = (Z)-1-(glycyl-L-cystein-S-yl)-2-phenylacetohydroximate + L-glutamate. Its pathway is secondary metabolite biosynthesis. Involved in glucosinolate biosynthesis. Hydrolyzes the gamma-glutamyl peptide bond of several glutathione (GSH) conjugates to produce Cys-Gly conjugates related to glucosinolates. The gamma-Glu-Cys-Gly-GSH conjugates are the sulfur-donating molecule in glucosinolate biosynthesis. Can use the GSH conjugate of the camalexin intermediate IAN (GS-IAN) as substrate. Required for the biosynthesis of camalexin, a pathogen-inducible phytoalexin with antibacterial and antifungal properties. This chain is Gamma-glutamyl peptidase 3, found in Arabidopsis thaliana (Mouse-ear cress).